A 130-amino-acid chain; its full sequence is S-adenosylmethionine decarboxylase proenzyme (130 aa).

The Schiff-base intermediate with substrate; via pyruvic acid role is filled by Ser78. The residue at position 78 (Ser78) is a Pyruvic acid (Ser); by autocatalysis. The active-site Proton acceptor; for processing activity is the His83. Cys98 (proton donor; for catalytic activity) is an active-site residue.

Belongs to the prokaryotic AdoMetDC family. Type 1 subfamily. Heterotetramer of two alpha and two beta chains arranged as a dimer of alpha/beta heterodimers. It depends on pyruvate as a cofactor. In terms of processing, is synthesized initially as an inactive proenzyme. Formation of the active enzyme involves a self-maturation process in which the active site pyruvoyl group is generated from an internal serine residue via an autocatalytic post-translational modification. Two non-identical subunits are generated from the proenzyme in this reaction, and the pyruvate is formed at the N-terminus of the alpha chain, which is derived from the carboxyl end of the proenzyme. The post-translation cleavage follows an unusual pathway, termed non-hydrolytic serinolysis, in which the side chain hydroxyl group of the serine supplies its oxygen atom to form the C-terminus of the beta chain, while the remainder of the serine residue undergoes an oxidative deamination to produce ammonia and the pyruvoyl group blocking the N-terminus of the alpha chain.

It catalyses the reaction S-adenosyl-L-methionine + H(+) = S-adenosyl 3-(methylsulfanyl)propylamine + CO2. It functions in the pathway amine and polyamine biosynthesis; S-adenosylmethioninamine biosynthesis; S-adenosylmethioninamine from S-adenosyl-L-methionine: step 1/1. Catalyzes the decarboxylation of S-adenosylmethionine to S-adenosylmethioninamine (dcAdoMet), the propylamine donor required for the synthesis of the polyamines spermine and spermidine from the diamine putrescine. This is S-adenosylmethionine decarboxylase proenzyme from Aeropyrum pernix (strain ATCC 700893 / DSM 11879 / JCM 9820 / NBRC 100138 / K1).